The sequence spans 192 residues: Ion-translocating oxidoreductase complex subunit B (192 aa).

The segment at 1-26 is hydrophobic; it reads MNTIWIAVGALALLGLVFGAILGYAS. The 4Fe-4S domain maps to 32–91; sequence EDDPVVEKIDAILPQSQCGQCGYPGCRPYAEAVGLQGEKINRCAPGGEAVMLKIAELLNV. The [4Fe-4S] cluster site is built by Cys-49, Cys-52, Cys-57, Cys-74, Cys-117, Cys-120, Cys-123, Cys-127, Cys-147, Cys-150, Cys-153, and Cys-157. 2 consecutive 4Fe-4S ferredoxin-type domains span residues 108-137 and 138-167; these read MLAVIDENNCIGCTKCIQACPVDAIVGATR and AMHTVMSDLCTGCNLCVDPCPTHCIELRPV.

The protein belongs to the 4Fe4S bacterial-type ferredoxin family. RnfB subfamily. The complex is composed of six subunits: RsxA, RsxB, RsxC, RsxD, RsxE and RsxG. Requires [4Fe-4S] cluster as cofactor.

It is found in the cell inner membrane. In terms of biological role, part of a membrane-bound complex that couples electron transfer with translocation of ions across the membrane. Required to maintain the reduced state of SoxR. In Salmonella newport (strain SL254), this protein is Ion-translocating oxidoreductase complex subunit B.